Here is a 556-residue protein sequence, read N- to C-terminus: Testis-specific protein 10-interacting protein (556 aa).

Residues 1 to 16 are compositionally biased toward polar residues; it reads MGQDTDMLNTYQQLVR. 4 disordered regions span residues 1–31, 50–102, 123–155, and 179–309; these read MGQD…LQAP, GCLG…LLPR, LQPS…ANLP, and GGVS…QWRK. The span at 208–219 shows a compositional bias: polar residues; it reads GSASDKQVQLQS. The span at 244–258 shows a compositional bias: acidic residues; the sequence is SEEEQFSEATEEAEE. Residues 289 to 301 show a composition bias toward polar residues; that stretch reads QGQSQGSSPSFNN. The stretch at 379–464 forms a coiled coil; that stretch reads RQEATRSLLQ…LQGIQHRVQA (86 aa). The disordered stretch occupies residues 503–556; it reads AGKVDREGTPRKPRSHRSMGVRMEHSPQRPPRTEPTGSQPDRHYNPSLDPECSP.

In Homo sapiens (Human), this protein is Testis-specific protein 10-interacting protein (TSGA10IP).